The sequence spans 203 residues: Probable proteasome subunit beta type-1 (203 aa).

Positions Met-1–Gly-10 are cleaved as a propeptide — removed in mature form. Thr-11 serves as the catalytic Nucleophile.

This sequence belongs to the peptidase T1B family. The 26S proteasome consists of a 20S proteasome core and two 19S regulatory subunits. The 20S proteasome core is composed of 28 subunits that are arranged in four stacked rings, resulting in a barrel-shaped structure. The two end rings are each formed by seven alpha subunits, and the two central rings are each formed by seven beta subunits. The catalytic chamber with the active sites is on the inside of the barrel.

The protein localises to the cytoplasm. The protein resides in the nucleus. The enzyme catalyses Cleavage of peptide bonds with very broad specificity.. Its function is as follows. The proteasome degrades poly-ubiquitinated proteins in the cytoplasm and in the nucleus. It is essential for the regulated turnover of proteins and for the removal of misfolded proteins. The proteasome is a multicatalytic proteinase complex that is characterized by its ability to cleave peptides with Arg, Phe, Tyr, Leu, and Glu adjacent to the leaving group at neutral or slightly basic pH. It has an ATP-dependent proteolytic activity. The protein is Probable proteasome subunit beta type-1 (PRE3) of Encephalitozoon cuniculi (strain GB-M1) (Microsporidian parasite).